We begin with the raw amino-acid sequence, 350 residues long: Nicotinate-nucleotide--dimethylbenzimidazole phosphoribosyltransferase (350 aa).

The active-site Proton acceptor is Glu-317.

The protein belongs to the CobT family.

It carries out the reaction 5,6-dimethylbenzimidazole + nicotinate beta-D-ribonucleotide = alpha-ribazole 5'-phosphate + nicotinate + H(+). It participates in nucleoside biosynthesis; alpha-ribazole biosynthesis; alpha-ribazole from 5,6-dimethylbenzimidazole: step 1/2. Catalyzes the synthesis of alpha-ribazole-5'-phosphate from nicotinate mononucleotide (NAMN) and 5,6-dimethylbenzimidazole (DMB). This chain is Nicotinate-nucleotide--dimethylbenzimidazole phosphoribosyltransferase, found in Shewanella sp. (strain ANA-3).